The chain runs to 328 residues: dITP/XTP pyrophosphatase (328 aa).

The segment at 1–129 (MSEKIYEYKD…ATSEQGFGDT (129 aa)) is unknown. Residues 130–324 (ILIATRNEGK…KLMEVFPAWQ (195 aa)) form an NTP pyrophosphatase region. Substrate is bound at residue 134-139 (TRNEGK). The Proton acceptor role is filled by aspartate 196. Aspartate 196 contacts Mg(2+). Substrate-binding positions include serine 197, 280 to 283 (FGYD), lysine 303, and 308 to 309 (HR).

Belongs to the HAM1 NTPase family. As to quaternary structure, homodimer. It depends on Mg(2+) as a cofactor.

The enzyme catalyses XTP + H2O = XMP + diphosphate + H(+). The catalysed reaction is dITP + H2O = dIMP + diphosphate + H(+). It carries out the reaction ITP + H2O = IMP + diphosphate + H(+). In terms of biological role, pyrophosphatase that catalyzes the hydrolysis of nucleoside triphosphates to their monophosphate derivatives, with a high preference for the non-canonical purine nucleotides XTP (xanthosine triphosphate), dITP (deoxyinosine triphosphate) and ITP. Seems to function as a house-cleaning enzyme that removes non-canonical purine nucleotides from the nucleotide pool, thus preventing their incorporation into DNA/RNA and avoiding chromosomal lesions. This Streptococcus pyogenes serotype M6 (strain ATCC BAA-946 / MGAS10394) protein is dITP/XTP pyrophosphatase.